A 296-amino-acid polypeptide reads, in one-letter code: DNA repair protein complementing XP-A cells homolog (296 aa).

Positions 1–10 (MSAEVSTNES) are enriched in polar residues. Residues 1–39 (MSAEVSTNESAPPAEKKSKLTNAQKARIERNQAKAQKLR) are disordered. The span at 26–39 (ARIERNQAKAQKLR) shows a compositional bias: basic and acidic residues. Positions 26-47 (ARIERNQAKAQKLREAKLVSHP) match the Nuclear localization signal motif. Zn(2+) contacts are provided by cysteine 126, cysteine 129, cysteine 147, and cysteine 150. Residues 126-150 (CLECGDMFADSYLFNNFGHSVCDKC) fold into a zinc finger.

Belongs to the XPA family. As to expression, strongly expressed in the central nervous system and muscles.

The protein resides in the nucleus. In terms of biological role, involved in DNA excision repair. Initiates repair by binding to damaged sites with various affinities, depending on the photoproduct and the transcriptional state of the region. The protein is DNA repair protein complementing XP-A cells homolog (Xpac) of Drosophila melanogaster (Fruit fly).